The primary structure comprises 573 residues: Urease subunit alpha 2 (573 aa).

The Urease domain occupies 135–573 (GGMDTHVHYI…ISLNQLYFFS (439 aa)). The Ni(2+) site is built by His140, His142, and Lys223. Lys223 is modified (N6-carboxylysine). His225 lines the substrate pocket. Positions 252 and 278 each coordinate Ni(2+). The active-site Proton donor is the His326. Ni(2+) is bound at residue Asp366.

The protein belongs to the metallo-dependent hydrolases superfamily. Urease alpha subunit family. As to quaternary structure, heterotrimer of UreA (gamma), UreB (beta) and UreC (alpha) subunits. Three heterotrimers associate to form the active enzyme. It depends on Ni cation as a cofactor. Post-translationally, carboxylation allows a single lysine to coordinate two nickel ions.

It localises to the cytoplasm. It carries out the reaction urea + 2 H2O + H(+) = hydrogencarbonate + 2 NH4(+). Its pathway is nitrogen metabolism; urea degradation; CO(2) and NH(3) from urea (urease route): step 1/1. The chain is Urease subunit alpha 2 from Brucella melitensis biotype 1 (strain ATCC 23456 / CCUG 17765 / NCTC 10094 / 16M).